The following is a 332-amino-acid chain: Acryloyl-coenzyme A reductase (332 aa).

Cys38 serves as a coordination point for Zn(2+). Tyr39 contacts NADP(+). Zn(2+) contacts are provided by His60, Asp90, Cys93, Cys96, Cys104, and Cys146. NADP(+) is bound by residues 172 to 175 (SGGV) and 194 to 196 (TTS).

The protein belongs to the zinc-containing alcohol dehydrogenase family. Monomer. Requires Zn(2+) as cofactor.

It carries out the reaction propanoyl-CoA + NADP(+) = acryloyl-CoA + NADPH + H(+). Its function is as follows. Plays a role in autotrophic carbon fixation via the 3-hydroxypropionate/4-hydroxybutyrate cycle. Catalyzes the acryloyl-CoA dependent NADPH oxidation and formation of propionyl-CoA. In Metallosphaera sedula (strain ATCC 51363 / DSM 5348 / JCM 9185 / NBRC 15509 / TH2), this protein is Acryloyl-coenzyme A reductase.